Here is a 270-residue protein sequence, read N- to C-terminus: Imidazole glycerol phosphate synthase subunit HisF (270 aa).

Active-site residues include aspartate 11 and aspartate 135.

The protein belongs to the HisA/HisF family. In terms of assembly, heterodimer of HisH and HisF.

The protein resides in the cytoplasm. The catalysed reaction is 5-[(5-phospho-1-deoxy-D-ribulos-1-ylimino)methylamino]-1-(5-phospho-beta-D-ribosyl)imidazole-4-carboxamide + L-glutamine = D-erythro-1-(imidazol-4-yl)glycerol 3-phosphate + 5-amino-1-(5-phospho-beta-D-ribosyl)imidazole-4-carboxamide + L-glutamate + H(+). It participates in amino-acid biosynthesis; L-histidine biosynthesis; L-histidine from 5-phospho-alpha-D-ribose 1-diphosphate: step 5/9. Its function is as follows. IGPS catalyzes the conversion of PRFAR and glutamine to IGP, AICAR and glutamate. The HisF subunit catalyzes the cyclization activity that produces IGP and AICAR from PRFAR using the ammonia provided by the HisH subunit. The polypeptide is Imidazole glycerol phosphate synthase subunit HisF (Haloquadratum walsbyi (strain DSM 16790 / HBSQ001)).